The following is a 284-amino-acid chain: 2-dehydro-3-deoxyphosphooctonate aldolase (284 aa).

The protein belongs to the KdsA family.

It is found in the cytoplasm. The catalysed reaction is D-arabinose 5-phosphate + phosphoenolpyruvate + H2O = 3-deoxy-alpha-D-manno-2-octulosonate-8-phosphate + phosphate. It functions in the pathway carbohydrate biosynthesis; 3-deoxy-D-manno-octulosonate biosynthesis; 3-deoxy-D-manno-octulosonate from D-ribulose 5-phosphate: step 2/3. It participates in bacterial outer membrane biogenesis; lipopolysaccharide biosynthesis. The polypeptide is 2-dehydro-3-deoxyphosphooctonate aldolase (Escherichia coli O6:K15:H31 (strain 536 / UPEC)).